The primary structure comprises 397 residues: Cathepsin E-A (397 aa).

Residues 1 to 16 form the signal peptide; the sequence is MRQILVLLLFATLVYG. The propeptide at 17 to 52 is activation peptide; that stretch reads LIRVPLKRQKSIRKTLKEKGKLSHIWTQQGIDMVQY. The Peptidase A1 domain occupies 74–385; sequence YFGEISVGTP…DRGNNRVGLA (312 aa). N-linked (GlcNAc...) asparagine glycosylation occurs at N86. The active site involves D92. Cysteines 105 and 110 form a disulfide. Residue N130 is glycosylated (N-linked (GlcNAc...) asparagine). C268 and C272 form a disulfide bridge. D277 is a catalytic residue. Residues C310 and C344 are joined by a disulfide bond.

This sequence belongs to the peptidase A1 family. In terms of assembly, homodimer; disulfide-linked. Glycosylated. Contains high mannose-type oligosaccharide. As to expression, expressed predominantly in the larval foregut and the anterior and posterior adult stomach.

It is found in the endosome. It catalyses the reaction Similar to cathepsin D, but slightly broader specificity.. May have a role in immune function. Probably involved in the processing of antigenic peptides during MHC class II-mediated antigen presentation. The protein is Cathepsin E-A (ctse-a) of Xenopus laevis (African clawed frog).